We begin with the raw amino-acid sequence, 115 residues long: Large ribosomal subunit protein bL20 (115 aa).

This sequence belongs to the bacterial ribosomal protein bL20 family.

Its function is as follows. Binds directly to 23S ribosomal RNA and is necessary for the in vitro assembly process of the 50S ribosomal subunit. It is not involved in the protein synthesizing functions of that subunit. The sequence is that of Large ribosomal subunit protein bL20 from Chlorobium chlorochromatii (strain CaD3).